A 118-amino-acid polypeptide reads, in one-letter code: Fluoride-specific ion channel FluC 1 (118 aa).

The next 2 helical transmembrane spans lie at 5-25 and 47-67; these read FLLV…ISVL and FLLG…FLGT. Positions 71 and 74 each coordinate Na(+). Residues 98 to 118 form a helical membrane-spanning segment; sequence YLGFTYVFGLIAAFLGMMLGV.

Belongs to the fluoride channel Fluc/FEX (TC 1.A.43) family.

It localises to the cell membrane. It catalyses the reaction fluoride(in) = fluoride(out). Na(+) is not transported, but it plays an essential structural role and its presence is essential for fluoride channel function. Functionally, fluoride-specific ion channel. Important for reducing fluoride concentration in the cell, thus reducing its toxicity. In Listeria monocytogenes serovar 1/2a (strain ATCC BAA-679 / EGD-e), this protein is Fluoride-specific ion channel FluC 1.